Consider the following 227-residue polypeptide: Threonine--tRNA ligase (227 aa).

The catalytic stretch occupies residues 1–120; sequence DIELKLSTRP…LIEHYEGAFP (120 aa).

It belongs to the class-II aminoacyl-tRNA synthetase family. In terms of assembly, homodimer.

The protein resides in the cytoplasm. It catalyses the reaction tRNA(Thr) + L-threonine + ATP = L-threonyl-tRNA(Thr) + AMP + diphosphate + H(+). Functionally, catalyzes the attachment of threonine to tRNA(Thr) in a two-step reaction: L-threonine is first activated by ATP to form Thr-AMP and then transferred to the acceptor end of tRNA(Thr). Also edits incorrectly charged L-seryl-tRNA(Thr). The protein is Threonine--tRNA ligase of Pseudomonas syringae pv. syringae.